Reading from the N-terminus, the 167-residue chain is Leptin (167 aa).

The first 21 residues, 1-21 (MRCGPLCRFLWLWPYLSYIEA), serve as a signal peptide directing secretion. C117 and C167 are disulfide-bonded.

The protein belongs to the leptin family.

Its subcellular location is the secreted. Its function is as follows. Key player in the regulation of energy balance and body weight control. Once released into the circulation, has central and peripheral effects by binding LEPR, found in many tissues, which results in the activation of several major signaling pathways. In the hypothalamus, acts as an appetite-regulating factor that induces a decrease in food intake and an increase in energy consumption by inducing anorexinogenic factors and suppressing orexigenic neuropeptides, also regulates bone mass and secretion of hypothalamo-pituitary-adrenal hormones. In the periphery, increases basal metabolism, influences reproductive function, regulates pancreatic beta-cell function and insulin secretion, is pro-angiogenic for endothelial cell and affects innate and adaptive immunity. In the arcuate nucleus of the hypothalamus, activates by depolarization POMC neurons inducing FOS and SOCS3 expression to release anorexigenic peptides and inhibits by hyperpolarization NPY neurons inducing SOCS3 with a consequent reduction on release of orexigenic peptides. In addition to its known satiety inducing effect, has a modulatory role in nutrient absorption. In the intestine, reduces glucose absorption by enterocytes by activating PKC and leading to a sequential activation of p38, PI3K and ERK signaling pathways which exerts an inhibitory effect on glucose absorption. Acts as a growth factor on certain tissues, through the activation of different signaling pathways increases expression of genes involved in cell cycle regulation such as CCND1, via JAK2-STAT3 pathway, or VEGFA, via MAPK1/3 and PI3K-AKT1 pathways. May also play an apoptotic role via JAK2-STAT3 pathway and up-regulation of BIRC5 expression. Pro-angiogenic, has mitogenic activity on vascular endothelial cells and plays a role in matrix remodeling by regulating the expression of matrix metalloproteinases (MMPs) and tissue inhibitors of metalloproteinases (TIMPs). In innate immunity, modulates the activity and function of neutrophils by increasing chemotaxis and the secretion of oxygen radicals. Increases phagocytosis by macrophages and enhances secretion of pro-inflammatory mediators. Increases cytotoxic ability of NK cells. Plays a pro-inflammatory role, in synergy with IL1B, by inducing NOS2 which promotes the production of IL6, IL8 and Prostaglandin E2, through a signaling pathway that involves JAK2, PI3K, MAP2K1/MEK1 and MAPK14/p38. In adaptive immunity, promotes the switch of memory T-cells towards T helper-1 cell immune responses. Increases CD4(+)CD25(-) T-cell proliferation and reduces autophagy during TCR (T-cell receptor) stimulation, through MTOR signaling pathway activation and BCL2 up-regulation. In Ursus thibetanus (Asiatic black bear), this protein is Leptin (LEP).